Reading from the N-terminus, the 265-residue chain is Putative hydro-lyase Teth514_1597 (265 aa).

Belongs to the D-glutamate cyclase family.

The protein is Putative hydro-lyase Teth514_1597 of Thermoanaerobacter sp. (strain X514).